Consider the following 318-residue polypeptide: Methionyl-tRNA formyltransferase (318 aa).

A (6S)-5,6,7,8-tetrahydrofolate-binding site is contributed by 110-113 (SLLP).

It belongs to the Fmt family.

The enzyme catalyses L-methionyl-tRNA(fMet) + (6R)-10-formyltetrahydrofolate = N-formyl-L-methionyl-tRNA(fMet) + (6S)-5,6,7,8-tetrahydrofolate + H(+). Its function is as follows. Attaches a formyl group to the free amino group of methionyl-tRNA(fMet). The formyl group appears to play a dual role in the initiator identity of N-formylmethionyl-tRNA by promoting its recognition by IF2 and preventing the misappropriation of this tRNA by the elongation apparatus. In Latilactobacillus sakei subsp. sakei (strain 23K) (Lactobacillus sakei subsp. sakei), this protein is Methionyl-tRNA formyltransferase.